A 218-amino-acid chain; its full sequence is Putative glutamine transport system permease protein GlnP (218 aa).

Residues 19–208 form the ABC transmembrane type-1 domain; sequence TLVTLKYSVI…ILVILISFIA (190 aa). Helical transmembrane passes span 25–45, 57–79, 86–108, and 187–207; these read YSVIAVILGLVIGMLLAICKV, FYTSIFRGTPLLVQLSIIYFAAP, FNVFMAGVISFALNSGAYVSEVI, and FFPMLIAACCYYILVILISFI.

Belongs to the binding-protein-dependent transport system permease family. HisMQ subfamily.

The protein resides in the cell inner membrane. In terms of biological role, part of the binding-protein-dependent transport system for glutamine; probably responsible for the translocation of the substrate across the membrane. The sequence is that of Putative glutamine transport system permease protein GlnP (glnP) from Rickettsia prowazekii (strain Madrid E).